We begin with the raw amino-acid sequence, 589 residues long: TAF5-like RNA polymerase II p300/CBP-associated factor-associated factor 65 kDa subunit 5L (589 aa).

Residues 211-221 (ASGSSSRSENN) show a composition bias toward polar residues. Positions 211–230 (ASGSSSRSENNGLEPPDMPS) are disordered. WD repeat units lie at residues 266–305 (NTEQ…LKSE), 340–379 (GHCG…NTVL), 382–421 (GHAY…PLRI), 424–463 (GHLA…SVRL), 466–505 (GHRG…LYKE), and 508–547 (GHTD…CSAP).

The protein belongs to the WD repeat TAF5 family. As to quaternary structure, the PCAF complex is composed of a number of TBP-associated factors (TAFS), such as TAF5, TAF5L, TAF6, TAF6L, TAF9, TAF10 and TAF12, PCAF, and also PCAF-associated factors (PAFs), such as TADA2L/ADA2, TADA3L/ADA3 and SPT3. Component of the STAGA transcription coactivator-HAT complex, at least composed of SUPT3H, GCN5L2, TAF5L, TAF6L, SUPT7L, TADA3L, TAD1L, TAF10, TAF12, TRRAP and TAF9.

The protein localises to the nucleus. Functions as a component of the PCAF complex. The PCAF complex is capable of efficiently acetylating histones in a nucleosomal context. The PCAF complex could be considered as the human version of the yeast SAGA complex. With TAF6L, acts as an epigenetic regulator essential for somatic reprogramming. Regulates target genes through H3K9ac deposition and MYC recruitment which trigger MYC regulatory network to orchestrate gene expression programs to control embryonic stem cell state. The polypeptide is TAF5-like RNA polymerase II p300/CBP-associated factor-associated factor 65 kDa subunit 5L (Homo sapiens (Human)).